A 776-amino-acid polypeptide reads, in one-letter code: Chitin synthase 1 (776 aa).

Helical transmembrane passes span 451–471 (LVSL…FYFL), 487–507 (FWIF…LFIV), 523–543 (LIIL…VFVI), 558–578 (VLVS…LMSI), 695–714 (VVLF…VQVY), and 723–743 (IYLA…AIGS).

It belongs to the chitin synthase family.

Its subcellular location is the cell membrane. It catalyses the reaction [(1-&gt;4)-N-acetyl-beta-D-glucosaminyl](n) + UDP-N-acetyl-alpha-D-glucosamine = [(1-&gt;4)-N-acetyl-beta-D-glucosaminyl](n+1) + UDP + H(+). With respect to regulation, requires proteolytic activation. Polymerizes chitin, a structural polymer of the cell wall and septum, by transferring the sugar moiety of UDP-GlcNAc to the non-reducing end of the growing chitin polymer. Also involved in forming cross walls in the hyphal phase. The protein is Chitin synthase 1 (CHS1) of Candida albicans (Yeast).